The sequence spans 276 residues: MKNWPLTTRSAFEKTGPIPRSISKTFEKLWKELDASAENEVMEEWRVARYQTVASLKYLLLLILIPVLVNQMSKSWIFGPLVDHVWSVNHADIFLNASQEERAFAQLQRFEERLHFDMLIGRLPTLSEEVIQQQIKNKALEIAYQYAQESAYAVKNVLADSASVASFLALMRFGKRQLSVFQSFVNEFIYGLSDTAKAFFIILFTDMFIGFHSPHGWEVLMEAVLRHFGLPENRDFIFLFIATFPVALDTVFKYWIFRYLNRVSPSAVATYHNMNE.

3 consecutive transmembrane segments (helical) span residues Leu-59 to Gly-79, Phe-199 to Val-219, and Phe-236 to Ile-256.

Belongs to the CemA family.

It localises to the plastid. The protein resides in the chloroplast inner membrane. The enzyme catalyses K(+)(in) + H(+)(out) = K(+)(out) + H(+)(in). Functionally, contributes to K(+)/H(+) antiport activity by supporting proton efflux to control proton extrusion and homeostasis in chloroplasts in a light-dependent manner to modulate photosynthesis. Prevents excessive induction of non-photochemical quenching (NPQ) under continuous-light conditions. Indirectly promotes efficient inorganic carbon uptake into chloroplasts. The polypeptide is Potassium/proton antiporter CemA (Cyanidioschyzon merolae (strain NIES-3377 / 10D) (Unicellular red alga)).